Here is a 61-residue protein sequence, read N- to C-terminus: Large ribosomal subunit protein uL30 (61 aa).

The protein belongs to the universal ribosomal protein uL30 family. Part of the 50S ribosomal subunit.

In Thermosipho melanesiensis (strain DSM 12029 / CIP 104789 / BI429), this protein is Large ribosomal subunit protein uL30.